The sequence spans 715 residues: Polyribonucleotide nucleotidyltransferase (715 aa).

Residues Asp493 and Asp499 each coordinate Mg(2+). Residues 560-619 (PRMITIKINPEKIRDVIGKGGSVIRALTEETGTTIDISDDGVVTIASTNSDGMAEAKKRI) enclose the KH domain. The S1 motif domain occupies 629–697 (GQVYEGTVLK…EKGRVRLSAK (69 aa)).

It belongs to the polyribonucleotide nucleotidyltransferase family. The cofactor is Mg(2+).

The protein resides in the cytoplasm. It carries out the reaction RNA(n+1) + phosphate = RNA(n) + a ribonucleoside 5'-diphosphate. Involved in mRNA degradation. Catalyzes the phosphorolysis of single-stranded polyribonucleotides processively in the 3'- to 5'-direction. The chain is Polyribonucleotide nucleotidyltransferase from Burkholderia lata (strain ATCC 17760 / DSM 23089 / LMG 22485 / NCIMB 9086 / R18194 / 383).